The following is a 268-amino-acid chain: MKPNNRTCDVITNKDESLPALLLPALNSYTCDDSLLKGQISSNGRYQPFGFSDCSLLPKRLNIQAGQGSMPVSSIQCADHSYSNWQKESEKTKLPKLGCPTEYTEYYKTVSSGETTDSAVVSSIATNRLKRKRQRDGPSCDSCRIKKIKCNATIIIFLQDRNLISSISSNLHYTLSQDDINQFRMKFFRKLPDVMGTYEVIKHLDKIVLFKACTSCSRRNQKNGKCLFSRGFTKSDMNVFPKINSKLKDKSIFEMTVDDYVAAGFQTL.

The protein belongs to the SUT1 family.

It is found in the nucleus. Its function is as follows. Putative transcription factor involved in the regulation of the activity of the cAMP/protein kinase A pathway. Involved in sterol uptake. With SUT1, positively regulates mating by repressing the expression of the mating inhibitors NCE102, PRR2 and RHO5 in response to pheromone. The sequence is that of Sterol uptake protein 2 from Saccharomyces cerevisiae (strain ATCC 204508 / S288c) (Baker's yeast).